Here is a 110-residue protein sequence, read N- to C-terminus: Small ribosomal subunit protein uS10m (110 aa).

The protein belongs to the universal ribosomal protein uS10 family.

Its subcellular location is the mitochondrion. The protein is Small ribosomal subunit protein uS10m (RPS10) of Pisum sativum (Garden pea).